The sequence spans 475 residues: WASH complex subunit 1 (475 aa).

Residues 1 to 54 (MTAVKTQHSLAGQVYAVPLIQPDLRREEAIQQVADALQYLQNISGDIFSRISQR) are required for WASH complex assembly. The segment at 1–167 (MTAVKTQHSL…EGLGGLPSNI (167 aa)) is WHD1. A Glycyl lysine isopeptide (Lys-Gly) (interchain with G-Cter in ubiquitin) cross-link involves residue Lys219. A disordered region spans residues 296–475 (EDGALLAPPP…GDEDEDDWES (180 aa)). Over residues 302-318 (APPPPPPPPPPPPPPAP) the composition is skewed to pro residues. Positions 357–475 (QGAPKEVVDP…GDEDEDDWES (119 aa)) are VCA. Positions 369 to 391 (GRATLLESIRQAGGIGKAKLRSV) constitute a WH2 domain. Positions 390-406 (SVKERKLEKKKQKEQEQ) are enriched in basic and acidic residues. A compositionally biased stretch (gly residues) spans 432–446 (SGKGPGTGTSEGPGG). A compositionally biased stretch (acidic residues) spans 466 to 475 (GDEDEDDWES).

It belongs to the WASH1 family. In terms of assembly, component of the WASH core complex also described as WASH regulatory complex SHRC composed of WASHC1, WASHC2, WASHC3, WASHC4 and WASHC5. The WASH core complex associates with the F-actin-capping protein dimer (formed by CAPZA1, CAPZA2 or CAPZA3 and CAPZB) in a transient or substoichiometric manner which was initially described as WASH complex. Interacts (via WHD1 region) with WASHC2; the interaction is direct. Interacts with BECN1; WASHC1 and AMBRA1 can competitively interact with BECN1. Interacts with BLOC1S2; may associate with the BLOC-1 complex. Interacts with tubulin gamma chain (TUBG1 or TUBG2). Interacts with TBC1D23. Ubiquitinated at Lys-219 via 'Lys-63'-linked ubiquitin chains by the TRIM27:MAGEL2 E3 ubiquitin ligase complex, leading to promote endosomal F-actin assembly.

It is found in the early endosome membrane. The protein resides in the recycling endosome membrane. In terms of biological role, acts as a component of the WASH core complex that functions as a nucleation-promoting factor (NPF) at the surface of endosomes, where it recruits and activates the Arp2/3 complex to induce actin polymerization, playing a key role in the fission of tubules that serve as transport intermediates during endosome sorting. Regulates the trafficking of endosomal alpha5beta1 integrin to the plasma membrane and involved in invasive cell migration. In T-cells involved in endosome-to-membrane recycling of receptors including T-cell receptor (TCR), CD28 and ITGAL; proposed to be implicated in T-cell proliferation and effector function. In dendritic cells involved in endosome-to-membrane recycling of major histocompatibility complex (MHC) class II probably involving retromer and subsequently allowing antigen sampling, loading and presentation during T-cell activation. Involved in cytokinesis and following polar body extrusion during oocyte meiotic maturation. Involved in Arp2/3 complex-dependent actin assembly driving Salmonella typhimurium invasion independent of ruffling. Involved in the exocytosis of MMP14 leading to matrix remodeling during invasive migration and implicating late endosome-to-plasma membrane tubular connections and cooperation with the exocyst complex. Involved in negative regulation of autophagy independently from its role in endosomal sorting by inhibiting BECN1 ubiquitination to inactivate PIK3C3/Vps34 activity. The polypeptide is WASH complex subunit 1 (Rattus norvegicus (Rat)).